The sequence spans 912 residues: Cadherin-2 (912 aa).

The N-terminal stretch at 1 to 28 (MCRIAGTPPRILPPLALMLLAALQQAPI) is a signal peptide. Residues 29 to 164 (KATCEDMLCK…DSSHLKRQKR (136 aa)) constitute a propeptide that is removed on maturation. Cadherin domains are found at residues 165–272 (DWVI…RPEF), 273–387 (LHQV…PPEF), 388–502 (TAMT…SPYF), 503–609 (VPNP…DNAP), and 610–720 (QVNP…DVDR). At 165 to 729 (DWVIPPINLP…RIVGAGLGTG (565 aa)) the chain is on the extracellular side. Positions 175, 231, 233, 264, 265, 266, 267, and 268 each coordinate Ca(2+). N-linked (GlcNAc...) asparagine glycosylation occurs at N278. 3 residues coordinate Ca(2+): D298, D300, and N306. N-linked (GlcNAc...) asparagine glycosylation is present at N330. D358 contributes to the Ca(2+) binding site. N-linked (GlcNAc...) asparagine glycans are attached at residues N407, N578, N628, and N657. A helical membrane pass occupies residues 730-752 (AIIAILLCIIILLILVLMFVVWM). At 753–912 (KRRDKERQAK…LADMYGGGDD (160 aa)) the chain is on the cytoplasmic side. The segment covering 869-886 (SGSTAGSLSSLNSSSSGG) has biased composition (low complexity). Positions 869–890 (SGSTAGSLSSLNSSSSGGEQDY) are disordered.

In terms of assembly, homodimer (via extracellular region). Can also form heterodimers with other cadherins (via extracellular region). Dimerization occurs in trans, i.e. with a cadherin chain from another cell. Interacts with CTNNA2. Expressed at intercalated disks in the heart (at protein level).

It is found in the cell membrane. Its subcellular location is the sarcolemma. It localises to the cell junction. The protein resides in the cell surface. The protein localises to the desmosome. It is found in the adherens junction. In terms of biological role, calcium-dependent cell adhesion protein; preferentially mediates homotypic cell-cell adhesion. Cadherins may thus contribute to the sorting of heterogeneous cell types, and thereby play an important role during embryonic development. Required for proper neurite branching, and pre- and postsynaptic organization. The polypeptide is Cadherin-2 (CDH2) (Gallus gallus (Chicken)).